Consider the following 410-residue polypeptide: LL-diaminopimelate aminotransferase (410 aa).

Substrate is bound by residues Tyr15 and Gly42. Residues Tyr72, Ser108–Lys109, Tyr132, Asn187, Tyr218, and Ser246–Ser248 each bind pyridoxal 5'-phosphate. Residues Lys109, Tyr132, and Asn187 each contribute to the substrate site. At Lys249 the chain carries N6-(pyridoxal phosphate)lysine. Pyridoxal 5'-phosphate is bound by residues Arg257 and Asn292. Substrate contacts are provided by Asn292 and Arg388.

Belongs to the class-I pyridoxal-phosphate-dependent aminotransferase family. LL-diaminopimelate aminotransferase subfamily. As to quaternary structure, homodimer. The cofactor is pyridoxal 5'-phosphate.

The catalysed reaction is (2S,6S)-2,6-diaminopimelate + 2-oxoglutarate = (S)-2,3,4,5-tetrahydrodipicolinate + L-glutamate + H2O + H(+). Its pathway is amino-acid biosynthesis; L-lysine biosynthesis via DAP pathway; LL-2,6-diaminopimelate from (S)-tetrahydrodipicolinate (aminotransferase route): step 1/1. Its function is as follows. Involved in the synthesis of meso-diaminopimelate (m-DAP or DL-DAP), required for both lysine and peptidoglycan biosynthesis. Catalyzes the direct conversion of tetrahydrodipicolinate to LL-diaminopimelate. The protein is LL-diaminopimelate aminotransferase of Geobacter sulfurreducens (strain ATCC 51573 / DSM 12127 / PCA).